Here is a 795-residue protein sequence, read N- to C-terminus: Phenylalanine--tRNA ligase beta subunit (795 aa).

Residues 39 to 148 enclose the tRNA-binding domain; sequence KSEFHGVVVG…KETLVGINVY (110 aa). The B5 domain occupies 400–475; it reads HKNNTIRLHH…RIYEYNNVHL (76 aa). Mg(2+) is bound by residues Asp453, Asp459, and Asp463. The 94-residue stretch at 701–794 folds into the FDX-ACB domain; sequence SKFPTVRRDI…LQKKFQAVLR (94 aa).

The protein belongs to the phenylalanyl-tRNA synthetase beta subunit family. Type 1 subfamily. Tetramer of two alpha and two beta subunits. Mg(2+) is required as a cofactor.

It localises to the cytoplasm. The enzyme catalyses tRNA(Phe) + L-phenylalanine + ATP = L-phenylalanyl-tRNA(Phe) + AMP + diphosphate + H(+). The sequence is that of Phenylalanine--tRNA ligase beta subunit (pheT) from Buchnera aphidicola subsp. Acyrthosiphon pisum (strain APS) (Acyrthosiphon pisum symbiotic bacterium).